A 336-amino-acid polypeptide reads, in one-letter code: Lipoyl synthase (336 aa).

Positions 81, 86, 92, 107, 111, 114, and 323 each coordinate [4Fe-4S] cluster. The Radical SAM core domain maps to 93 to 312; the sequence is FGHGTATFMI…EDYGYELGFS (220 aa).

The protein belongs to the radical SAM superfamily. Lipoyl synthase family. Requires [4Fe-4S] cluster as cofactor.

It is found in the cytoplasm. The enzyme catalyses [[Fe-S] cluster scaffold protein carrying a second [4Fe-4S](2+) cluster] + N(6)-octanoyl-L-lysyl-[protein] + 2 oxidized [2Fe-2S]-[ferredoxin] + 2 S-adenosyl-L-methionine + 4 H(+) = [[Fe-S] cluster scaffold protein] + N(6)-[(R)-dihydrolipoyl]-L-lysyl-[protein] + 4 Fe(3+) + 2 hydrogen sulfide + 2 5'-deoxyadenosine + 2 L-methionine + 2 reduced [2Fe-2S]-[ferredoxin]. It functions in the pathway protein modification; protein lipoylation via endogenous pathway; protein N(6)-(lipoyl)lysine from octanoyl-[acyl-carrier-protein]: step 2/2. Functionally, catalyzes the radical-mediated insertion of two sulfur atoms into the C-6 and C-8 positions of the octanoyl moiety bound to the lipoyl domains of lipoate-dependent enzymes, thereby converting the octanoylated domains into lipoylated derivatives. This chain is Lipoyl synthase, found in Stenotrophomonas maltophilia (strain R551-3).